The primary structure comprises 245 residues: tRNA pseudouridine synthase A (245 aa).

Asp52 serves as the catalytic Nucleophile. Residue Tyr111 participates in substrate binding.

Belongs to the tRNA pseudouridine synthase TruA family. Homodimer.

The enzyme catalyses uridine(38/39/40) in tRNA = pseudouridine(38/39/40) in tRNA. Its function is as follows. Formation of pseudouridine at positions 38, 39 and 40 in the anticodon stem and loop of transfer RNAs. The chain is tRNA pseudouridine synthase A from Bradyrhizobium sp. (strain BTAi1 / ATCC BAA-1182).